The primary structure comprises 167 residues: Brain ribonuclease (167 aa).

The signal sequence occupies residues 1 to 26 (MALKSLVLLSLLVLVLLLVQVQPSLG). Positions 33 and 36 each coordinate substrate. The active-site Proton acceptor is His-38. 4 disulfides stabilise this stretch: Cys-52-Cys-110, Cys-66-Cys-121, Cys-84-Cys-136, and Cys-91-Cys-98. 67–71 (KPVNT) lines the substrate pocket. N-linked (GlcNAc...) asparagine glycosylation is present at Asn-88. The substrate site is built by Lys-92 and Arg-111. His-145 acts as the Proton donor in catalysis. The O-linked (GalNAc...) threonine glycan is linked to Thr-155. Ser-159 carries an O-linked (GalNAc...) serine glycan.

The protein belongs to the pancreatic ribonuclease family.

It localises to the secreted. The chain is Brain ribonuclease (BRN) from Bos taurus (Bovine).